Here is a 291-residue protein sequence, read N- to C-terminus: ATP synthase gamma chain (291 aa).

This sequence belongs to the ATPase gamma chain family. F-type ATPases have 2 components, CF(1) - the catalytic core - and CF(0) - the membrane proton channel. CF(1) has five subunits: alpha(3), beta(3), gamma(1), delta(1), epsilon(1). CF(0) has three main subunits: a, b and c.

The protein resides in the cell inner membrane. Its function is as follows. Produces ATP from ADP in the presence of a proton gradient across the membrane. The gamma chain is believed to be important in regulating ATPase activity and the flow of protons through the CF(0) complex. This Rhodopseudomonas palustris (strain HaA2) protein is ATP synthase gamma chain.